The primary structure comprises 518 residues: Cytochrome P450 monooxygenase psoD (518 aa).

C442 lines the heme pocket.

Belongs to the cytochrome P450 family. Heme serves as cofactor.

The protein operates within secondary metabolite biosynthesis. Cytochrome P450 monooxygenase; part of the gene cluster that mediates the biosynthesis of pseurotin A, a competitive inhibitor of chitin synthase and an inducer of nerve-cell proliferation. The PKS-NRPS hybrid synthetase psoA is responsible for the biosynthesis of azaspirene, one of the first intermediates having the 1-oxa-7-azaspiro[4,4]-non-2-ene-4,6-dione core of pseurotin, via condensation of one acetyl-CoA, 4 malonyl-CoA, and a L-phenylalanine molecule. The dual-functional monooxygenase/methyltransferase psoF seems to be involved in the addition of the C3 methyl group onto the pseurotin scaffold. Azaspirene is then converted to synerazol through 4 steps including oxidation of C17 by the cytochrome P450 monooxygenase psoD, O-methylation of the hydroxy group of C8 by the methyltransferase psoC, and the trans-to-cis isomerization of the C13 olefin by the glutathione S-transferase psoE. The fourth step of synerazol production is performed by the dual-functional monooxygenase/methyltransferase psoF which seems to catalyze the epoxidation of the intermediate deepoxy-synerazol. Synerazol can be attacked by a water molecule nonenzymatically at two different positions to yield two diol products, pseurotin A and pseurotin D. This chain is Cytochrome P450 monooxygenase psoD, found in Aspergillus fumigatus (strain ATCC MYA-4609 / CBS 101355 / FGSC A1100 / Af293) (Neosartorya fumigata).